A 379-amino-acid chain; its full sequence is Protein-glutamate methylesterase/protein-glutamine glutaminase (379 aa).

The region spanning lysine 4–leucine 121 is the Response regulatory domain. A 4-aspartylphosphate modification is found at aspartate 55. The 195-residue stretch at serine 185–glycine 379 folds into the CheB-type methylesterase domain. Residues serine 197, histidine 224, and aspartate 321 contribute to the active site.

The protein belongs to the CheB family. Post-translationally, phosphorylated by CheA. Phosphorylation of the N-terminal regulatory domain activates the methylesterase activity.

The protein resides in the cytoplasm. The catalysed reaction is [protein]-L-glutamate 5-O-methyl ester + H2O = L-glutamyl-[protein] + methanol + H(+). It catalyses the reaction L-glutaminyl-[protein] + H2O = L-glutamyl-[protein] + NH4(+). Its function is as follows. Involved in chemotaxis. Part of a chemotaxis signal transduction system that modulates chemotaxis in response to various stimuli. Catalyzes the demethylation of specific methylglutamate residues introduced into the chemoreceptors (methyl-accepting chemotaxis proteins or MCP) by CheR. Also mediates the irreversible deamidation of specific glutamine residues to glutamic acid. The chain is Protein-glutamate methylesterase/protein-glutamine glutaminase from Colwellia psychrerythraea (strain 34H / ATCC BAA-681) (Vibrio psychroerythus).